Consider the following 301-residue polypeptide: Formamidopyrimidine-DNA glycosylase (301 aa).

The active-site Schiff-base intermediate with DNA is the P2. Residue E3 is the Proton donor of the active site. The Proton donor; for beta-elimination activity role is filled by K58. DNA contacts are provided by H109, R131, and K174. The segment at 265-301 (SVYDREGQACRTPGCGGTVARIVQAGRSTFYCATCQK) adopts an FPG-type zinc-finger fold. R291 serves as the catalytic Proton donor; for delta-elimination activity.

This sequence belongs to the FPG family. Monomer. Zn(2+) is required as a cofactor.

It carries out the reaction Hydrolysis of DNA containing ring-opened 7-methylguanine residues, releasing 2,6-diamino-4-hydroxy-5-(N-methyl)formamidopyrimidine.. It catalyses the reaction 2'-deoxyribonucleotide-(2'-deoxyribose 5'-phosphate)-2'-deoxyribonucleotide-DNA = a 3'-end 2'-deoxyribonucleotide-(2,3-dehydro-2,3-deoxyribose 5'-phosphate)-DNA + a 5'-end 5'-phospho-2'-deoxyribonucleoside-DNA + H(+). In terms of biological role, involved in base excision repair of DNA damaged by oxidation or by mutagenic agents. Acts as a DNA glycosylase that recognizes and removes damaged bases. Has a preference for oxidized purines, such as 7,8-dihydro-8-oxoguanine (8-oxoG). Has AP (apurinic/apyrimidinic) lyase activity and introduces nicks in the DNA strand. Cleaves the DNA backbone by beta-delta elimination to generate a single-strand break at the site of the removed base with both 3'- and 5'-phosphates. The protein is Formamidopyrimidine-DNA glycosylase of Rhizobium leguminosarum bv. trifolii (strain WSM2304).